The chain runs to 147 residues: 3-hydroxyacyl-[acyl-carrier-protein] dehydratase FabZ (147 aa).

Residue H53 is part of the active site.

Belongs to the thioester dehydratase family. FabZ subfamily.

It is found in the cytoplasm. The enzyme catalyses a (3R)-hydroxyacyl-[ACP] = a (2E)-enoyl-[ACP] + H2O. Functionally, involved in unsaturated fatty acids biosynthesis. Catalyzes the dehydration of short chain beta-hydroxyacyl-ACPs and long chain saturated and unsaturated beta-hydroxyacyl-ACPs. The polypeptide is 3-hydroxyacyl-[acyl-carrier-protein] dehydratase FabZ (Synechococcus sp. (strain WH7803)).